Here is a 78-residue protein sequence, read N- to C-terminus: Calcium/calmodulin-dependent protein kinase II inhibitor 1 (78 aa).

A CAMK2 inhibitory domain region spans residues N41–K68.

Belongs to the CAMK2N family. Interacts with CAMK2B; the presence of Ca(2+)/calmodulin increases the interaction but is not essential. Interacts with CAMK2A; this interaction requires CAMK2A activation by Ca(2+).

The protein localises to the synapse. It is found in the cell projection. Its subcellular location is the dendrite. The protein resides in the postsynaptic density. Functionally, potent and specific inhibitor of CaM-kinase II (CAMK2). Plays a role in the maintenance of long-term retrieval-induced memory in response to contextual fear. Modulates blood pressure and vascular reactivity via regulation of CAMK2 activity in addition to regulation of left ventricular mass. Mediates the NLRP3 inflammasome in cardiomyocytes via acting as an inhibitor of the MAPK14/p38 and MAPK8/JNK pathways, thereby regulating ventricular remodeling and cardiac rhythm post-myocardial infarction. Negatively effects insulin sensitivity and promotes lipid formation in adipose tissues independent of CAMK2 signaling. The polypeptide is Calcium/calmodulin-dependent protein kinase II inhibitor 1 (CAMK2N1) (Homo sapiens (Human)).